The following is a 179-amino-acid chain: Large ribosomal subunit protein uL5 (179 aa).

Belongs to the universal ribosomal protein uL5 family. In terms of assembly, part of the 50S ribosomal subunit; part of the 5S rRNA/L5/L18/L25 subcomplex. Contacts the 5S rRNA and the P site tRNA. Forms a bridge to the 30S subunit in the 70S ribosome.

This is one of the proteins that bind and probably mediate the attachment of the 5S RNA into the large ribosomal subunit, where it forms part of the central protuberance. In the 70S ribosome it contacts protein S13 of the 30S subunit (bridge B1b), connecting the 2 subunits; this bridge is implicated in subunit movement. Contacts the P site tRNA; the 5S rRNA and some of its associated proteins might help stabilize positioning of ribosome-bound tRNAs. The polypeptide is Large ribosomal subunit protein uL5 (Erwinia tasmaniensis (strain DSM 17950 / CFBP 7177 / CIP 109463 / NCPPB 4357 / Et1/99)).